A 351-amino-acid chain; its full sequence is MSATFTLGQLAERLGATLRGAEAKVITGLATLQEARPEQLSFLANAQYRKFLAQTQAGAVLLSAADAEGYAGDALIVANPYLAYAQLSHLFDRKPKAAPGIHATAQVADDAQVDPSASVGPYAVIESGARIGAEVSIGAHCVVGARSVIGDGGWLAPRVTLYHDVQIGKRVVIQSGAVIGGEGFGFANEKGVWQKIAQIGGVTIGDDVEIGANTTIDRGALSDTLIGNGVKLDNQIMIAHNVQVGDNTAMAGCCGISGSTKIGKNCMIAGGVGMVGHIEVCDNVFVTGMTMVTRSITEPGAYSSGTAMQPAGEWKKSAARIRQLDEMAKRLRELEKQLAAVTQTANVSSDA.

The Proton acceptor role is filled by histidine 240.

The protein belongs to the transferase hexapeptide repeat family. LpxD subfamily. Homotrimer.

It catalyses the reaction a UDP-3-O-[(3R)-3-hydroxyacyl]-alpha-D-glucosamine + a (3R)-hydroxyacyl-[ACP] = a UDP-2-N,3-O-bis[(3R)-3-hydroxyacyl]-alpha-D-glucosamine + holo-[ACP] + H(+). The protein operates within bacterial outer membrane biogenesis; LPS lipid A biosynthesis. In terms of biological role, catalyzes the N-acylation of UDP-3-O-acylglucosamine using 3-hydroxyacyl-ACP as the acyl donor. Is involved in the biosynthesis of lipid A, a phosphorylated glycolipid that anchors the lipopolysaccharide to the outer membrane of the cell. The polypeptide is UDP-3-O-acylglucosamine N-acyltransferase (Ectopseudomonas mendocina (strain ymp) (Pseudomonas mendocina)).